The following is a 218-amino-acid chain: MAKTSTSVIVAKTLVHAAALAPIALLGWQFWQVWQSGSDALGADPVAEIEHRTGLWALRFLLITLAITPLRQLTGQAVLIRFRRMLGLYAFFYATVHLAAYLTLDLRGFWTQIFEEILKRPYITVGFAAWLLLMPLAITSTQGWMRRLKRNWGRVHMLIYPIGLLAVLHFWWLVKSDIREPALYAGILAVLLGWRAWKKLSARRTKARRSAPPQATPR.

Helical transmembrane passes span 8 to 28 (VIVAKTLVHAAALAPIALLGW), 60 to 80 (FLLITLAITPLRQLTGQAVLI), 86 to 106 (LGLYAFFYATVHLAAYLTLDL), 121 to 141 (PYITVGFAAWLLLMPLAITST), and 155 to 175 (VHMLIYPIGLLAVLHFWWLVK).

Belongs to the MsrQ family. Heterodimer of a catalytic subunit (MsrP) and a heme-binding subunit (MsrQ). FMN is required as a cofactor. Heme b serves as cofactor.

It is found in the cell inner membrane. Its function is as follows. Part of the MsrPQ system that repairs oxidized periplasmic proteins containing methionine sulfoxide residues (Met-O), using respiratory chain electrons. Thus protects these proteins from oxidative-stress damage caused by reactive species of oxygen and chlorine generated by the host defense mechanisms. MsrPQ is essential for the maintenance of envelope integrity under bleach stress, rescuing a wide series of structurally unrelated periplasmic proteins from methionine oxidation. MsrQ provides electrons for reduction to the reductase catalytic subunit MsrP, using the quinone pool of the respiratory chain. The sequence is that of Protein-methionine-sulfoxide reductase heme-binding subunit MsrQ from Xanthomonas oryzae pv. oryzae (strain MAFF 311018).